Reading from the N-terminus, the 485-residue chain is Glutamyl-tRNA(Gln) amidotransferase subunit A (485 aa).

Active-site charge relay system residues include Lys74 and Ser149. Residue Ser173 is the Acyl-ester intermediate of the active site.

It belongs to the amidase family. GatA subfamily. Heterotrimer of A, B and C subunits.

The catalysed reaction is L-glutamyl-tRNA(Gln) + L-glutamine + ATP + H2O = L-glutaminyl-tRNA(Gln) + L-glutamate + ADP + phosphate + H(+). Allows the formation of correctly charged Gln-tRNA(Gln) through the transamidation of misacylated Glu-tRNA(Gln) in organisms which lack glutaminyl-tRNA synthetase. The reaction takes place in the presence of glutamine and ATP through an activated gamma-phospho-Glu-tRNA(Gln). This Janthinobacterium sp. (strain Marseille) (Minibacterium massiliensis) protein is Glutamyl-tRNA(Gln) amidotransferase subunit A.